A 380-amino-acid polypeptide reads, in one-letter code: Cytochrome b (380 aa).

4 consecutive transmembrane segments (helical) span residues 34-54 (FGSLLGICLTTQILTGLLLAM), 78-99 (WLIRNMHANGASLLFICIYLHI), 114-134 (WNTGVILLLTLMATAFVGYVL), and 179-199 (FFALHFLLPFMITGLTLIHLT). Residues His84 and His98 each contribute to the heme b site. Heme b-binding residues include His183 and His197. His202 is a binding site for a ubiquinone. The next 4 membrane-spanning stretches (helical) occupy residues 227–247 (TKDILGFTLMLLPLTTLALFS), 289–309 (LGGVLALAASVLVLFLSPLLH), 321–341 (LSQLLFWTLVANLLILTWIGS), and 348–368 (FIIIGQLASTTYFIILLILFP).

It belongs to the cytochrome b family. As to quaternary structure, the cytochrome bc1 complex contains 11 subunits: 3 respiratory subunits (MT-CYB, CYC1 and UQCRFS1), 2 core proteins (UQCRC1 and UQCRC2) and 6 low-molecular weight proteins (UQCRH/QCR6, UQCRB/QCR7, UQCRQ/QCR8, UQCR10/QCR9, UQCR11/QCR10 and a cleavage product of UQCRFS1). This cytochrome bc1 complex then forms a dimer. Heme b is required as a cofactor.

The protein localises to the mitochondrion inner membrane. Component of the ubiquinol-cytochrome c reductase complex (complex III or cytochrome b-c1 complex) that is part of the mitochondrial respiratory chain. The b-c1 complex mediates electron transfer from ubiquinol to cytochrome c. Contributes to the generation of a proton gradient across the mitochondrial membrane that is then used for ATP synthesis. The protein is Cytochrome b (MT-CYB) of Pygoscelis antarcticus (Chinstrap penguin).